Reading from the N-terminus, the 354-residue chain is UDP-N-acetylglucosamine--N-acetylmuramyl-(pentapeptide) pyrophosphoryl-undecaprenol N-acetylglucosamine transferase 3 (354 aa).

UDP-N-acetyl-alpha-D-glucosamine-binding positions include 12-14 (TAG), arginine 163, serine 193, and glutamine 287.

This sequence belongs to the glycosyltransferase 28 family. MurG subfamily.

Its subcellular location is the cell membrane. It catalyses the reaction di-trans,octa-cis-undecaprenyl diphospho-N-acetyl-alpha-D-muramoyl-L-alanyl-D-glutamyl-meso-2,6-diaminopimeloyl-D-alanyl-D-alanine + UDP-N-acetyl-alpha-D-glucosamine = di-trans,octa-cis-undecaprenyl diphospho-[N-acetyl-alpha-D-glucosaminyl-(1-&gt;4)]-N-acetyl-alpha-D-muramoyl-L-alanyl-D-glutamyl-meso-2,6-diaminopimeloyl-D-alanyl-D-alanine + UDP + H(+). The protein operates within cell wall biogenesis; peptidoglycan biosynthesis. In terms of biological role, cell wall formation. Catalyzes the transfer of a GlcNAc subunit on undecaprenyl-pyrophosphoryl-MurNAc-pentapeptide (lipid intermediate I) to form undecaprenyl-pyrophosphoryl-MurNAc-(pentapeptide)GlcNAc (lipid intermediate II). This chain is UDP-N-acetylglucosamine--N-acetylmuramyl-(pentapeptide) pyrophosphoryl-undecaprenol N-acetylglucosamine transferase 3, found in Bacillus cereus (strain ATCC 14579 / DSM 31 / CCUG 7414 / JCM 2152 / NBRC 15305 / NCIMB 9373 / NCTC 2599 / NRRL B-3711).